The following is a 329-amino-acid chain: Porphobilinogen deaminase (329 aa).

Cys-253 carries the S-(dipyrrolylmethanemethyl)cysteine modification.

Belongs to the HMBS family. As to quaternary structure, monomer. It depends on dipyrromethane as a cofactor.

It carries out the reaction 4 porphobilinogen + H2O = hydroxymethylbilane + 4 NH4(+). Tetrapolymerization of the monopyrrole PBG into the hydroxymethylbilane pre-uroporphyrinogen in several discrete steps. The polypeptide is Porphobilinogen deaminase (Leifsonia xyli subsp. xyli (strain CTCB07)).